The sequence spans 481 residues: Aspartyl/glutamyl-tRNA(Asn/Gln) amidotransferase subunit B (481 aa).

The protein belongs to the GatB/GatE family. GatB subfamily. Heterotrimer of A, B and C subunits.

The catalysed reaction is L-glutamyl-tRNA(Gln) + L-glutamine + ATP + H2O = L-glutaminyl-tRNA(Gln) + L-glutamate + ADP + phosphate + H(+). It carries out the reaction L-aspartyl-tRNA(Asn) + L-glutamine + ATP + H2O = L-asparaginyl-tRNA(Asn) + L-glutamate + ADP + phosphate + 2 H(+). In terms of biological role, allows the formation of correctly charged Asn-tRNA(Asn) or Gln-tRNA(Gln) through the transamidation of misacylated Asp-tRNA(Asn) or Glu-tRNA(Gln) in organisms which lack either or both of asparaginyl-tRNA or glutaminyl-tRNA synthetases. The reaction takes place in the presence of glutamine and ATP through an activated phospho-Asp-tRNA(Asn) or phospho-Glu-tRNA(Gln). This is Aspartyl/glutamyl-tRNA(Asn/Gln) amidotransferase subunit B from Pseudomonas savastanoi pv. phaseolicola (strain 1448A / Race 6) (Pseudomonas syringae pv. phaseolicola (strain 1448A / Race 6)).